Here is a 386-residue protein sequence, read N- to C-terminus: Probable pectin lyase F (386 aa).

Positions 1–16 (MKTAVLSLLLALQAYA) are cleaved as a signal peptide. Cysteines 77 and 101 form a disulfide. N-linked (GlcNAc...) asparagine glycosylation is present at asparagine 124. Arginine 251 is an active-site residue. A disulfide bridge links cysteine 326 with cysteine 334.

This sequence belongs to the polysaccharide lyase 1 family.

It localises to the secreted. It carries out the reaction Eliminative cleavage of (1-&gt;4)-alpha-D-galacturonan methyl ester to give oligosaccharides with 4-deoxy-6-O-methyl-alpha-D-galact-4-enuronosyl groups at their non-reducing ends.. Its function is as follows. Pectinolytic enzymes consist of four classes of enzymes: pectin lyase, polygalacturonase, pectin methylesterase and rhamnogalacturonase. Among pectinolytic enzymes, pectin lyase is the most important in depolymerization of pectin, since it cleaves internal glycosidic bonds of highly methylated pectins. This Neosartorya fischeri (strain ATCC 1020 / DSM 3700 / CBS 544.65 / FGSC A1164 / JCM 1740 / NRRL 181 / WB 181) (Aspergillus fischerianus) protein is Probable pectin lyase F (pelF).